The primary structure comprises 125 residues: Translation initiation factor 5A (125 aa).

Lysine 36 is modified (hypusine).

It belongs to the eIF-5A family.

It localises to the cytoplasm. Its function is as follows. Functions by promoting the formation of the first peptide bond. The polypeptide is Translation initiation factor 5A (eIF5A) (Halorubrum lacusprofundi (strain ATCC 49239 / DSM 5036 / JCM 8891 / ACAM 34)).